Consider the following 141-residue polypeptide: Galactose-6-phosphate isomerase subunit LacA 1 (141 aa).

Belongs to the LacAB/RpiB family. As to quaternary structure, heteromultimeric protein consisting of LacA and LacB.

The catalysed reaction is aldehydo-D-galactose 6-phosphate = keto-D-tagatose 6-phosphate. It functions in the pathway carbohydrate metabolism; D-galactose 6-phosphate degradation; D-tagatose 6-phosphate from D-galactose 6-phosphate: step 1/1. The polypeptide is Galactose-6-phosphate isomerase subunit LacA 1 (Streptococcus pyogenes serotype M6 (strain ATCC BAA-946 / MGAS10394)).